A 380-amino-acid chain; its full sequence is Crotonobetainyl-CoA reductase (380 aa).

It belongs to the acyl-CoA dehydrogenase family. In terms of assembly, homotetramer. Requires FAD as cofactor.

It localises to the cytoplasm. The catalysed reaction is 4-(trimethylamino)butanoyl-CoA + oxidized [electron-transfer flavoprotein] + H(+) = crotonobetainyl-CoA + reduced [electron-transfer flavoprotein]. It functions in the pathway amine and polyamine metabolism; carnitine metabolism. In terms of biological role, catalyzes the reduction of crotonobetainyl-CoA to gamma-butyrobetainyl-CoA. The sequence is that of Crotonobetainyl-CoA reductase from Shigella flexneri serotype 5b (strain 8401).